The primary structure comprises 353 residues: Protein Wnt-11b (353 aa).

An N-terminal signal peptide occupies residues Met-1–Ala-22. Residues Asn-31, Asn-38, and Asn-88 are each glycosylated (N-linked (GlcNAc...) asparagine). Intrachain disulfides connect Cys-78/Cys-89, Cys-128/Cys-136, Cys-138/Cys-155, Cys-208/Cys-222, and Cys-210/Cys-217. Residue Ser-214 is the site of O-palmitoleoyl serine; by PORCN attachment. 2 positions are modified to sulfotyrosine: Tyr-274 and Tyr-281. Cystine bridges form between Cys-282-Cys-313, Cys-298-Cys-308, Cys-312-Cys-352, Cys-328-Cys-343, Cys-330-Cys-340, and Cys-335-Cys-336. An N-linked (GlcNAc...) asparagine glycan is attached at Asn-299.

This sequence belongs to the Wnt family. As to quaternary structure, homodimer. Secreted homodimers form a complex with wnt5a homodimers; tyrosine sulfation of both wnt11 and wnt5a by tpst1 is required for this interaction. Interacts with the transmembrane receptor fzd7/fz7. Interacts with lrp6 and ryk. Interacts with tdgf1/frl1. Interacts weakly with frzb1 and strongly with frzb2/crescent. Interaction with frzb2/crescent antagonizes wnt11 function in the neuroectoderm, but enhances it in mesodermal tissue. Post-translationally, glycosylation is required for protein secretion. Palmitoleoylation is required for efficient binding to frizzled receptors. Depalmitoleoylation leads to Wnt signaling pathway inhibition. In terms of tissue distribution, transcripts are expressed ubiquitously in early oocytes but become vegetally localized during mid-oogenesis then enriched on the dorsal side by the 8 to 16 cell stage. The protein becomes asymmetrically concentrated on the dorsal side by the 64-cell stage. During gastrulation, expressed in the lateral and ventral marginal zone, and during tadpole stages in the somites and first branchial arch. Weakly expressed in the pronephros from at least stage 12.5, with kidney expression increasing until stage 35. Expressed in the prospective posterior gut between stages 13 and 20, and in the deep foregut endoderm. Prior to neural crest cell migration, expressed in a domain flanking the neural crest on the lateral or epidermal side (the opposite side to wnt11/wnt11-r).

The protein resides in the secreted. It localises to the extracellular space. Its subcellular location is the extracellular matrix. Ligand for the frizzled7 transmembrane receptor. Primarily acts via non-canonical Wnt pathways mediated by either Ca(2+) and PKC, or by JNK and dvl2/dsh. Depending on the cellular context, can also signal via the canonical Wnt pathway mediated by beta-catenin and dvl2/dsh. May also inhibit canonical Wnt signaling. Maternally initiates dorsal/ventral axis formation by a canonical route, which signals via lrp6. In a complex with wnt5a, activates the canonical and non-canonical processes involved in axis formation. In the non-canonical pathway, acts through fzd7/fz7 to induce phosphorylation of dvl2/dsh. Signals through a non-canonical Wnt pathway to regulate convergent extension movements during gastrulation. Interactions with the secreted Wnt antagonist sfrp5 to coordinate foregut development, acting via a non-canonical Wnt pathway whereby sfrp5 restricts wnt11b activity to prevent inappropriate foregut formation. Mediates cardiogenesis via non-canonical Wnt signaling involving JNK-activation and PKC. Acts redundantly with wnt11/wnt11r during pronephros induction. This chain is Protein Wnt-11b (wnt11b), found in Xenopus laevis (African clawed frog).